The primary structure comprises 409 residues: Phosphopentomutase (409 aa).

Positions 10, 302, 307, 343, 344, and 355 each coordinate Mn(2+).

Belongs to the phosphopentomutase family. It depends on Mn(2+) as a cofactor.

It localises to the cytoplasm. It carries out the reaction 2-deoxy-alpha-D-ribose 1-phosphate = 2-deoxy-D-ribose 5-phosphate. The catalysed reaction is alpha-D-ribose 1-phosphate = D-ribose 5-phosphate. It functions in the pathway carbohydrate degradation; 2-deoxy-D-ribose 1-phosphate degradation; D-glyceraldehyde 3-phosphate and acetaldehyde from 2-deoxy-alpha-D-ribose 1-phosphate: step 1/2. Its function is as follows. Isomerase that catalyzes the conversion of deoxy-ribose 1-phosphate (dRib-1-P) and ribose 1-phosphate (Rib-1-P) to deoxy-ribose 5-phosphate (dRib-5-P) and ribose 5-phosphate (Rib-5-P), respectively. In Chelativorans sp. (strain BNC1), this protein is Phosphopentomutase.